Reading from the N-terminus, the 91-residue chain is Putative septation protein SpoVG (91 aa).

It belongs to the SpoVG family.

In terms of biological role, could be involved in septation. This is Putative septation protein SpoVG from Clostridium beijerinckii (strain ATCC 51743 / NCIMB 8052) (Clostridium acetobutylicum).